The sequence spans 164 residues: Pathogenesis-related protein PRB1-2 (164 aa).

A signal peptide spans 1-24 (MQTPKLAILLALAMAAAMVNLSQA). Pyrrolidone carboxylic acid is present on Q25. Positions 34–152 (PHNAARSAVG…NRGVFITCNY (119 aa)) constitute an SCP domain. Disulfide bonds link C68–C140, C113–C119, and C135–C150.

It belongs to the CRISP family.

Functionally, probably involved in the defense reaction of plants against pathogens. The polypeptide is Pathogenesis-related protein PRB1-2 (Hordeum vulgare (Barley)).